The primary structure comprises 101 residues: MILEHVLVLSAYLFLIGLYGLITSRNMVRALMCLELILNAVNMNLVTFSDFFDNSQLKGDIFCIFVIAIAAAEAAIGLAIVSSIYRNRKSTRINQSTLLNK.

3 consecutive transmembrane segments (helical) span residues 2 to 22 (ILEHVLVLSAYLFLIGLYGLI), 32 to 52 (MCLELILNAVNMNLVTFSDFF), and 61 to 81 (IFCIFVIAIAAAEAAIGLAIV).

Belongs to the complex I subunit 4L family. NDH is composed of at least 16 different subunits, 5 of which are encoded in the nucleus.

It localises to the plastid. The protein localises to the chloroplast thylakoid membrane. The enzyme catalyses a plastoquinone + NADH + (n+1) H(+)(in) = a plastoquinol + NAD(+) + n H(+)(out). It carries out the reaction a plastoquinone + NADPH + (n+1) H(+)(in) = a plastoquinol + NADP(+) + n H(+)(out). Functionally, NDH shuttles electrons from NAD(P)H:plastoquinone, via FMN and iron-sulfur (Fe-S) centers, to quinones in the photosynthetic chain and possibly in a chloroplast respiratory chain. The immediate electron acceptor for the enzyme in this species is believed to be plastoquinone. Couples the redox reaction to proton translocation, and thus conserves the redox energy in a proton gradient. The chain is NAD(P)H-quinone oxidoreductase subunit 4L, chloroplastic from Draba nemorosa (Woodland whitlowgrass).